We begin with the raw amino-acid sequence, 507 residues long: Subtilisin-like protease 1 (507 aa).

The N-terminal stretch at Met-1 to Ala-19 is a signal peptide. Residues Ala-20–Asn-116 constitute a propeptide that is removed on maturation. The Inhibitor I9 domain maps to Ser-34 to Ile-113. The Peptidase S8 domain occupies Ser-126–Lys-400. Active-site charge relay system residues include Asp-158 and His-190. The disordered stretch occupies residues Gly-175–Met-198. Asn-251 is a glycosylation site (N-linked (GlcNAc...) asparagine). Residues Asn-282–Ser-294 show a composition bias toward polar residues. Residues Asn-282–Ser-312 are disordered. Ser-345 functions as the Charge relay system in the catalytic mechanism. The segment covering Ser-378 to Ile-394 has biased composition (polar residues). Positions Ser-378–Asp-486 are disordered. Composition is skewed to pro residues over residues Lys-405–Pro-428 and Glu-438–Pro-449. A compositionally biased stretch (low complexity) spans Phe-450–Pro-461. A compositionally biased stretch (pro residues) spans Ala-462–Pro-476.

Belongs to the peptidase S8 family.

Its subcellular location is the secreted. Its function is as follows. Secreted subtilisin-like serine protease with keratinolytic activity that contributes to pathogenicity. The protein is Subtilisin-like protease 1 (SUB1) of Trichophyton tonsurans (Scalp ringworm fungus).